A 452-amino-acid chain; its full sequence is MTATADLWPLFPDHIKQLQTRAERLFKRENLDLVAIHSGQQKRWFLDDMNYPFRANPHFKAWCPETQLANAWVILKPNTRPTLVLLSSPDFWHTTASLEGAPWLEEFHVEHISSPEAIEKLLPYDKKSAAYLGEHIEVAKALGFENINPDPVLHFFHYHRLFKTDYEIACLTQANHIAAEGHVAAADAFFNGASEFDCLLKYMAATRQGQNEVPYNHIIGQNENASVLHHWMPDKKASGSLKSMLVDAGAEVCGYAADISRTWSKQHNEYEELIAALDQITLALIDKMKPGVEFPALHQLAHEQIANVLFAFGFVSCSPEQMIEDGITTVFLPHGLGHPLGLQVHDVGAAQADERGTPIAPPSGHLTLKTTRTVEPRQVYTIEPGIYFIEPLLQKLANSRNKHLINWRRVDEFKPFGGVRIEDNIVVYRERNDNLTRQTALDAYVKKVTRLA.

Residues aspartate 247, aspartate 258, histidine 338, glutamate 383, and glutamate 422 each coordinate Mn(2+).

The protein belongs to the peptidase M24B family. Bacterial-type prolidase subfamily. Mn(2+) serves as cofactor.

It catalyses the reaction Xaa-L-Pro dipeptide + H2O = an L-alpha-amino acid + L-proline. Functionally, splits dipeptides with a prolyl residue in the C-terminal position. The sequence is that of Xaa-Pro dipeptidase 1 from Idiomarina loihiensis (strain ATCC BAA-735 / DSM 15497 / L2-TR).